The following is a 612-amino-acid chain: Elongation factor 4 (612 aa).

Residues 11-193 form the tr-type G domain; sequence NHIRNFSIVA…KIVTDIPAPS (183 aa). Residues 23-28 and 140-143 contribute to the GTP site; these read DHGKST and NKID.

The protein belongs to the TRAFAC class translation factor GTPase superfamily. Classic translation factor GTPase family. LepA subfamily.

The protein localises to the cell membrane. The catalysed reaction is GTP + H2O = GDP + phosphate + H(+). Its function is as follows. Required for accurate and efficient protein synthesis under certain stress conditions. May act as a fidelity factor of the translation reaction, by catalyzing a one-codon backward translocation of tRNAs on improperly translocated ribosomes. Back-translocation proceeds from a post-translocation (POST) complex to a pre-translocation (PRE) complex, thus giving elongation factor G a second chance to translocate the tRNAs correctly. Binds to ribosomes in a GTP-dependent manner. The protein is Elongation factor 4 of Lactobacillus acidophilus (strain ATCC 700396 / NCK56 / N2 / NCFM).